Here is an 802-residue protein sequence, read N- to C-terminus: Leucine--tRNA ligase (802 aa).

The short motif at 40-51 (PYPSGAGLHVGH) is the 'HIGH' region element. Positions 576 to 580 (KMSKS) match the 'KMSKS' region motif. Position 579 (Lys579) interacts with ATP.

The protein belongs to the class-I aminoacyl-tRNA synthetase family.

Its subcellular location is the cytoplasm. It carries out the reaction tRNA(Leu) + L-leucine + ATP = L-leucyl-tRNA(Leu) + AMP + diphosphate. This is Leucine--tRNA ligase from Bacillus cereus (strain ATCC 10987 / NRS 248).